The chain runs to 969 residues: Translation initiation factor IF-2 (969 aa).

A disordered region spans residues 96–377; that stretch reads KRDPAEPVRA…NSRNQHQDRR (282 aa). Composition is skewed to low complexity over residues 105–157, 167–181, and 216–252; these read AEPA…QAEP, AAPAQAVAEPVEPAK, and PSAPAESPKSAKAEPAAAPKTTAKPGEIRRAAAPAAP. Over residues 253–264 the composition is skewed to basic and acidic residues; the sequence is DRAREEARRAAE. The span at 357–366 shows a compositional bias: gly residues; that stretch reads RAGGKGGRGG. The 168-residue stretch at 470–637 folds into the tr-type G domain; that stretch reads PRAPVVTVMG…NVLLQAEILE (168 aa). The tract at residues 479-486 is G1; it reads GHVDHGKT. Residue 479–486 participates in GTP binding; that stretch reads GHVDHGKT. The tract at residues 504-508 is G2; sequence GITQH. The segment at 525–528 is G3; that stretch reads DTPG. Residues 525–529 and 579–582 contribute to the GTP site; these read DTPGH and NKID. The segment at 579–582 is G4; it reads NKID. A G5 region spans residues 615-617; the sequence is SAK.

The protein belongs to the TRAFAC class translation factor GTPase superfamily. Classic translation factor GTPase family. IF-2 subfamily.

Its subcellular location is the cytoplasm. One of the essential components for the initiation of protein synthesis. Protects formylmethionyl-tRNA from spontaneous hydrolysis and promotes its binding to the 30S ribosomal subunits. Also involved in the hydrolysis of GTP during the formation of the 70S ribosomal complex. This chain is Translation initiation factor IF-2, found in Bordetella parapertussis (strain 12822 / ATCC BAA-587 / NCTC 13253).